Consider the following 694-residue polypeptide: Methionine--tRNA ligase (694 aa).

The 'HIGH' region motif lies at 12 to 22 (PYANGPLHLGH). The Zn(2+) site is built by Cys-143, Cys-146, Cys-156, and Cys-159. The short motif at 330 to 334 (KMSKS) is the 'KMSKS' region element. Lys-333 is an ATP binding site. Low complexity predominate over residues 550–575 (LAAPAAPATTSKAAPAKPDTKPAAAA). Residues 550 to 580 (LAAPAAPATTSKAAPAKPDTKPAAAANPQSP) form a disordered region. The tRNA-binding domain maps to 591–694 (DFAKLDLRIG…SGAQPGMPVR (104 aa)).

This sequence belongs to the class-I aminoacyl-tRNA synthetase family. MetG type 1 subfamily. In terms of assembly, homodimer. Requires Zn(2+) as cofactor.

It localises to the cytoplasm. It catalyses the reaction tRNA(Met) + L-methionine + ATP = L-methionyl-tRNA(Met) + AMP + diphosphate. Its function is as follows. Is required not only for elongation of protein synthesis but also for the initiation of all mRNA translation through initiator tRNA(fMet) aminoacylation. In Xanthomonas oryzae pv. oryzae (strain MAFF 311018), this protein is Methionine--tRNA ligase.